We begin with the raw amino-acid sequence, 403 residues long: Probable tRNA sulfurtransferase (403 aa).

One can recognise a THUMP domain in the interval glutamine 60 to threonine 165. Residues methionine 183–leucine 184, histidine 208–phenylalanine 209, arginine 265, glycine 287, and glutamine 296 contribute to the ATP site.

It belongs to the ThiI family.

The protein localises to the cytoplasm. It catalyses the reaction [ThiI sulfur-carrier protein]-S-sulfanyl-L-cysteine + a uridine in tRNA + 2 reduced [2Fe-2S]-[ferredoxin] + ATP + H(+) = [ThiI sulfur-carrier protein]-L-cysteine + a 4-thiouridine in tRNA + 2 oxidized [2Fe-2S]-[ferredoxin] + AMP + diphosphate. The catalysed reaction is [ThiS sulfur-carrier protein]-C-terminal Gly-Gly-AMP + S-sulfanyl-L-cysteinyl-[cysteine desulfurase] + AH2 = [ThiS sulfur-carrier protein]-C-terminal-Gly-aminoethanethioate + L-cysteinyl-[cysteine desulfurase] + A + AMP + 2 H(+). Its pathway is cofactor biosynthesis; thiamine diphosphate biosynthesis. Its function is as follows. Catalyzes the ATP-dependent transfer of a sulfur to tRNA to produce 4-thiouridine in position 8 of tRNAs, which functions as a near-UV photosensor. Also catalyzes the transfer of sulfur to the sulfur carrier protein ThiS, forming ThiS-thiocarboxylate. This is a step in the synthesis of thiazole, in the thiamine biosynthesis pathway. The sulfur is donated as persulfide by IscS. In Listeria monocytogenes serovar 1/2a (strain ATCC BAA-679 / EGD-e), this protein is Probable tRNA sulfurtransferase.